Consider the following 229-residue polypeptide: MFGTIFNTVMIIAGSIIGGIFKKGIKDEYQDILMQAMGFAAVALGINAITQHLPDSKYPILFIVSLAIGGLLGQIINLELRFNKLVNKFSKSNLAEGLSTAVLLFCIGSLSILGPVEAALHGDYTYLLTNGMLDGITSIVLASTFGFGIAAAALVLFSWQGSIYLFAQVMESAINTDLINEITIVGGILILSSGLSILGIKKFKTLNLLPSLLIPPVVIFVIHAFGLRF.

7 helical membrane passes run 1-21, 32-52, 58-78, 100-120, 139-159, 178-198, and 206-226; these read MFGT…GGIF, ILMQ…ITQH, YPIL…IINL, TAVL…EAAL, IVLA…LFSW, LINE…LSIL, and LNLL…HAFG.

It localises to the cell membrane. This is an uncharacterized protein from Bacillus subtilis (strain 168).